The following is a 364-amino-acid chain: Probable protein disulfide-isomerase A6 (364 aa).

Positions 1–28 are cleaved as a signal peptide; it reads MKMEMHQIWSRIALASFAFAILFVSVSA. 2 consecutive Thioredoxin domains span residues 29 to 137 and 139 to 256; these read DDVV…TEGG and NVKI…EKSG. Catalysis depends on nucleophile residues Cys58, Cys61, Cys177, and Cys180. 2 disulfide bridges follow: Cys58/Cys61 and Cys177/Cys180.

It belongs to the protein disulfide isomerase family.

It is found in the endoplasmic reticulum lumen. The catalysed reaction is Catalyzes the rearrangement of -S-S- bonds in proteins.. This chain is Probable protein disulfide-isomerase A6, found in Medicago sativa (Alfalfa).